Consider the following 119-residue polypeptide: Putative F-box protein At2g39415 (119 aa).

Residues 37–92 enclose the F-box domain; sequence IDSISSLPDVILQQILSSLPTNLAIRTSVLSTRWRHVWSDTPYIYFDGPGTLYRGL.

In Arabidopsis thaliana (Mouse-ear cress), this protein is Putative F-box protein At2g39415.